We begin with the raw amino-acid sequence, 156 residues long: Transcriptional repressor NrdR (156 aa).

A zinc finger spans residues 3-34; sequence CPYCGETEDKVIDSRQGKEADVIRRRRECLSC. In terms of domain architecture, ATP-cone spans 49–139; it reads LVIIKKDGRR…VYREFKHVND (91 aa).

This sequence belongs to the NrdR family. Zn(2+) serves as cofactor.

Negatively regulates transcription of bacterial ribonucleotide reductase nrd genes and operons by binding to NrdR-boxes. This is Transcriptional repressor NrdR from Desulfatibacillum aliphaticivorans.